Consider the following 610-residue polypeptide: Ecto-NOX disulfide-thiol exchanger 2 (610 aa).

The 80-residue stretch at 128 to 207 folds into the RRM domain; sequence KTVFVGGLPE…GRLHVDFAQA (80 aa). Coiled-coil stretches lie at residues 293 to 328 and 381 to 505; these read IQSA…LSGI and RREE…KESC.

It belongs to the ENOX family. Requires Cu cation as cofactor. Glycosylated. Found in the sera of cancer patients with a wide variety of cancers including breast, prostate, lung and ovarian cancers, leukemias, and lymphomas. Not found in the serum of healthy volunteers or patients with disorders other than cancer. Probably shed into serum by cancer cells. Found on the cell borders of renal, kidney and ovarian carcinomas but not on the borders of surrounding non-cancerous stromal cells.

Its subcellular location is the cell membrane. The protein localises to the secreted. The protein resides in the extracellular space. With respect to regulation, inhibited by the antitumor sulfonylurea LY181984, the vabilloid capsaicin, and retinoids. Its function is as follows. May be involved in cell growth. Probably acts as a terminal oxidase of plasma electron transport from cytosolic NAD(P)H via hydroquinones to acceptors at the cell surface. Hydroquinone oxidase activity alternates with a protein disulfide-thiol interchange/oxidoreductase activity which may control physical membrane displacements associated with vesicle budding or cell enlargement. The activities oscillate with a period length of 22 minutes and play a role in control of the ultradian cellular biological clock. The chain is Ecto-NOX disulfide-thiol exchanger 2 (ENOX2) from Homo sapiens (Human).